Reading from the N-terminus, the 229-residue chain is MKSSDIDQDLFTDSYCKVCSAQLISESQRVAHYESRKHASKVRLYYMLHPRDGGCPAKRLRAENGSDADMVDKNKCCTLCNMSFTSAVVADSHYQGKIHAKRLKLLLGEKPPLKTTAAPLSSLKAPRVDTAPVVASPYQRRDSDRYCGLCAAWFNNPLMAQQHYEGKKHKKNAARVALLEQLGTSLDLGELRGLRRTYRCTTCSVSLNSIEQYHAHLQGSKHQTNLKNK.

Matrin-type zinc fingers lie at residues 14–44 (SYCKVCSAQLISESQRVAHYESRKHASKVRL), 72–106 (DKNKCCTLCNMSFTSAVVADSHYQGKIHAKRLKLL), 145–175 (RYCGLCAAWFNNPLMAQQHYEGKKHKKNAAR), and 198–228 (YRCTTCSVSLNSIEQYHAHLQGSKHQTNLKN).

The protein resides in the nucleus. The chain is Zinc finger matrin-type protein 4 (Zmat4) from Mus musculus (Mouse).